The sequence spans 513 residues: Protein disulfide-isomerase (513 aa).

The signal sequence occupies residues 1-23 (MAIRSKAWISLLLALAVALSARA). The 122-residue stretch at 24–145 (EEEPAAAAEG…IVDYLKKQVG (122 aa)) folds into the Thioredoxin 1 domain. Active-site nucleophile residues include Cys63 and Cys66. A disulfide bridge links Cys63 with Cys66. The N-linked (GlcNAc...) asparagine glycan is linked to Asn279. The Thioredoxin 2 domain occupies 366-485 (FRNSEPIPEV…IVDFIKKSKE (120 aa)). Catalysis depends on nucleophile residues Cys408 and Cys411. Cys408 and Cys411 are disulfide-bonded. The interval 485-513 (ETAAPHHHHHPGATGIREGSRAEPVKDEL) is disordered. The span at 502-513 (EGSRAEPVKDEL) shows a compositional bias: basic and acidic residues. Positions 510-513 (KDEL) match the Prevents secretion from ER motif.

This sequence belongs to the protein disulfide isomerase family.

It localises to the endoplasmic reticulum lumen. The catalysed reaction is Catalyzes the rearrangement of -S-S- bonds in proteins.. Participates in the folding of proteins containing disulfide bonds, may be involved in glycosylation, prolyl hydroxylation and triglyceride transfer. The chain is Protein disulfide-isomerase (PDI) from Zea mays (Maize).